We begin with the raw amino-acid sequence, 379 residues long: NADH-quinone oxidoreductase subunit D 2 (379 aa).

Belongs to the complex I 49 kDa subunit family. In terms of assembly, NDH-1 is composed of 14 different subunits. Subunits NuoB, C, D, E, F, and G constitute the peripheral sector of the complex.

The protein localises to the cell inner membrane. It catalyses the reaction a quinone + NADH + 5 H(+)(in) = a quinol + NAD(+) + 4 H(+)(out). In terms of biological role, NDH-1 shuttles electrons from NADH, via FMN and iron-sulfur (Fe-S) centers, to quinones in the respiratory chain. The immediate electron acceptor for the enzyme in this species is believed to be ubiquinone. Couples the redox reaction to proton translocation (for every two electrons transferred, four hydrogen ions are translocated across the cytoplasmic membrane), and thus conserves the redox energy in a proton gradient. The sequence is that of NADH-quinone oxidoreductase subunit D 2 from Anaeromyxobacter dehalogenans (strain 2CP-C).